Reading from the N-terminus, the 341-residue chain is S-adenosylmethionine:tRNA ribosyltransferase-isomerase (341 aa).

The protein belongs to the QueA family. As to quaternary structure, monomer.

It is found in the cytoplasm. It catalyses the reaction 7-aminomethyl-7-carbaguanosine(34) in tRNA + S-adenosyl-L-methionine = epoxyqueuosine(34) in tRNA + adenine + L-methionine + 2 H(+). It functions in the pathway tRNA modification; tRNA-queuosine biosynthesis. In terms of biological role, transfers and isomerizes the ribose moiety from AdoMet to the 7-aminomethyl group of 7-deazaguanine (preQ1-tRNA) to give epoxyqueuosine (oQ-tRNA). In Acetivibrio thermocellus (strain ATCC 27405 / DSM 1237 / JCM 9322 / NBRC 103400 / NCIMB 10682 / NRRL B-4536 / VPI 7372) (Clostridium thermocellum), this protein is S-adenosylmethionine:tRNA ribosyltransferase-isomerase.